A 360-amino-acid polypeptide reads, in one-letter code: Photosystem II protein D1 (360 aa).

3 helical membrane-spanning segments follow: residues tyrosine 29–threonine 46, glutamine 118–leucine 133, and tryptophan 142–alanine 156. Tyrosine 126 serves as a coordination point for pheophytin a. Residues aspartate 170 and glutamate 189 each coordinate [CaMn4O5] cluster. Residues phenylalanine 197–leucine 218 traverse the membrane as a helical segment. Histidine 198 is a binding site for chlorophyll a. A quinone contacts are provided by residues histidine 215 and serine 264–phenylalanine 265. Histidine 215 contacts Fe cation. Histidine 272 provides a ligand contact to Fe cation. Residues phenylalanine 274–methionine 288 form a helical membrane-spanning segment. Residues histidine 332, glutamate 333, aspartate 342, and alanine 344 each coordinate [CaMn4O5] cluster. Residues serine 345–glycine 360 constitute a propeptide that is removed on maturation.

The protein belongs to the reaction center PufL/M/PsbA/D family. As to quaternary structure, PSII is composed of 1 copy each of membrane proteins PsbA, PsbB, PsbC, PsbD, PsbE, PsbF, PsbH, PsbI, PsbJ, PsbK, PsbL, PsbM, PsbT, PsbX, PsbY, PsbZ, Psb30/Ycf12, peripheral proteins PsbO, CyanoQ (PsbQ), PsbU, PsbV and a large number of cofactors. It forms dimeric complexes. The D1/D2 heterodimer binds P680, chlorophylls that are the primary electron donor of PSII, and subsequent electron acceptors. It shares a non-heme iron and each subunit binds pheophytin, quinone, additional chlorophylls, carotenoids and lipids. D1 provides most of the ligands for the Mn4-Ca-O5 cluster of the oxygen-evolving complex (OEC). There is also a Cl(-1) ion associated with D1 and D2, which is required for oxygen evolution. The PSII complex binds additional chlorophylls, carotenoids and specific lipids. serves as cofactor. Post-translationally, tyr-161 forms a radical intermediate that is referred to as redox-active TyrZ, YZ or Y-Z. In terms of processing, C-terminally processed by CtpA; processing is essential to allow assembly of the oxygen-evolving complex and thus photosynthetic growth.

Its subcellular location is the cellular thylakoid membrane. The enzyme catalyses 2 a plastoquinone + 4 hnu + 2 H2O = 2 a plastoquinol + O2. Photosystem II (PSII) is a light-driven water:plastoquinone oxidoreductase that uses light energy to abstract electrons from H(2)O, generating O(2) and a proton gradient subsequently used for ATP formation. It consists of a core antenna complex that captures photons, and an electron transfer chain that converts photonic excitation into a charge separation. The D1/D2 (PsbA/PsbD) reaction center heterodimer binds P680, the primary electron donor of PSII as well as several subsequent electron acceptors. The chain is Photosystem II protein D1 from Synechocystis sp. (strain PCC 6714) (Aphanocapsa sp. (strain PCC 6714)).